Here is a 238-residue protein sequence, read N- to C-terminus: Putative tyrosine-protein phosphatase OCA1 (238 aa).

Residues 1 to 43 (MTSKVGEYEDVPEDESRLTEENVSVPEEEVEDEDEEEDDDDDH) are disordered. An N-acetylthreonine modification is found at threonine 2. Serine 24 carries the phosphoserine modification. Residues 26–42 (PEEEVEDEDEEEDDDDD) are compositionally biased toward acidic residues. One can recognise a Tyrosine-protein phosphatase domain in the interval 72–230 (NFCPVERYLY…LVKIDKNKAP (159 aa)). Cysteine 168 (phosphocysteine intermediate) is an active-site residue.

Belongs to the protein-tyrosine phosphatase family.

It localises to the cytoplasm. It catalyses the reaction O-phospho-L-tyrosyl-[protein] + H2O = L-tyrosyl-[protein] + phosphate. Functionally, putative tyrosine-protein phosphatase required for protection against superoxide stress. Involved in cell-cycle delay in response to linoleic acid hydroperoxide (LoaOOH). The protein is Putative tyrosine-protein phosphatase OCA1 (OCA1) of Saccharomyces cerevisiae (strain YJM789) (Baker's yeast).